The primary structure comprises 126 residues: Small ribosomal subunit protein uS13 (126 aa).

The segment at 92–126 (HRMGLPVRGQRTRTNARTRRGRRQTVAGKKKAPGK) is disordered. Positions 101-126 (QRTRTNARTRRGRRQTVAGKKKAPGK) are enriched in basic residues.

The protein belongs to the universal ribosomal protein uS13 family. Part of the 30S ribosomal subunit. Forms a loose heterodimer with protein S19. Forms two bridges to the 50S subunit in the 70S ribosome.

Located at the top of the head of the 30S subunit, it contacts several helices of the 16S rRNA. In the 70S ribosome it contacts the 23S rRNA (bridge B1a) and protein L5 of the 50S subunit (bridge B1b), connecting the 2 subunits; these bridges are implicated in subunit movement. Contacts the tRNAs in the A and P-sites. The sequence is that of Small ribosomal subunit protein uS13 from Nostoc sp. (strain PCC 7120 / SAG 25.82 / UTEX 2576).